Reading from the N-terminus, the 156-residue chain is D-aminoacyl-tRNA deacylase (156 aa).

The short motif at 137–138 (GP) is the Gly-cisPro motif, important for rejection of L-amino acids element.

The protein belongs to the DTD family. In terms of assembly, homodimer.

Its subcellular location is the cytoplasm. It catalyses the reaction glycyl-tRNA(Ala) + H2O = tRNA(Ala) + glycine + H(+). The enzyme catalyses a D-aminoacyl-tRNA + H2O = a tRNA + a D-alpha-amino acid + H(+). Functionally, an aminoacyl-tRNA editing enzyme that deacylates mischarged D-aminoacyl-tRNAs. Also deacylates mischarged glycyl-tRNA(Ala), protecting cells against glycine mischarging by AlaRS. Acts via tRNA-based rather than protein-based catalysis; rejects L-amino acids rather than detecting D-amino acids in the active site. By recycling D-aminoacyl-tRNA to D-amino acids and free tRNA molecules, this enzyme counteracts the toxicity associated with the formation of D-aminoacyl-tRNA entities in vivo and helps enforce protein L-homochirality. The sequence is that of D-aminoacyl-tRNA deacylase from Ruegeria sp. (strain TM1040) (Silicibacter sp.).